A 98-amino-acid polypeptide reads, in one-letter code: uncharacterized protein (98 aa).

The disordered stretch occupies residues 53–98 (AALEGGRHRHRGESASGNGIQHGVPPNVALIPSGSTLLTPARSGHV).

This is an uncharacterized protein from Mycolicibacterium smegmatis (strain ATCC 700084 / mc(2)155) (Mycobacterium smegmatis).